Reading from the N-terminus, the 154-residue chain is Large ribosomal subunit protein uL30 (154 aa).

This sequence belongs to the universal ribosomal protein uL30 family. Part of the 50S ribosomal subunit.

The protein is Large ribosomal subunit protein uL30 of Methanocaldococcus jannaschii (strain ATCC 43067 / DSM 2661 / JAL-1 / JCM 10045 / NBRC 100440) (Methanococcus jannaschii).